The following is a 94-amino-acid chain: Cell division topological specificity factor (94 aa).

Belongs to the MinE family.

Functionally, prevents the cell division inhibition by proteins MinC and MinD at internal division sites while permitting inhibition at polar sites. This ensures cell division at the proper site by restricting the formation of a division septum at the midpoint of the long axis of the cell. In Alkaliphilus metalliredigens (strain QYMF), this protein is Cell division topological specificity factor.